Consider the following 823-residue polypeptide: MRKRTLVSVLFLFSLLFLLPDQGRKLHANAEESSDDVTDPPKVEEKIGGHGGLSTDSDVVHRESESMSKKTLRSNAEKFEFQAEVSRLMDIIINSLYSNKDIFLRELISNASDALDKIRFLALTDKDVLGEGDTAKLEIQIKLDKAKKILSIRDRGIGMTKEDLIKNLGTIAKSGTSAFVEKMQSSGDLNLIGQFGVGFYSAYLVADYIEVISKHNDDSQYVWESKANGKFAVSEDTWNEPLGRGTEIRLHLRDEAGEYLEESKLKELVKRYSEFINFPISLWASKEVETEVPVEEDESADEETETTSTEEEKEEDAEEEDGEKKQKTKKVKETVYEWELLNDVKAIWLRSPKEVTEEEYTKFYHSLSKDFTDEKPMAWSHFNAEGDVEFKAVLYVPPKAPHDLYESYYNSNKANLKLYVRRVFISDEFDELLPKYLSFLKGLVDSDTLPLNVSREMLQQHSSLKTIKKKLIRKALDMIRKLAEEDPDEIHDDEKKDVEKSGENDEKKGQYTKFWNEFGKSVKLGIIEDAANRNRLAKLLRFETTKSDGKLTSLDQYIKRMKKSQKDIFYITGSSKEQLEKSPFLERLIKKGYEVIFFTDPVDEYLMQYLMDYEDKKFQNVSKEGLKVGKDSKDKELKEAFKELTKWWKGNLASENVDDVKISNRLADTPCVVVTSKFGWSANMERIMQSQTLSDANKQAYMRGKRVLEINPRHPIIKELKDRIASDPEDESVKETAQLMYQTALIESGFILTDPKDFAARIYNSVKSGLNISPDAVADEEIEAAEEPETSEATETKSDDLAGGLNIEAEPVEQQEENTKDEL.

Residues 1-23 (MRKRTLVSVLFLFSLLFLLPDQG) form the signal peptide. Positions 29–60 (NAEESSDDVTDPPKVEEKIGGHGGLSTDSDVV) are disordered. Residues 39–48 (DPPKVEEKIG) are compositionally biased toward basic and acidic residues. Residues Glu106, Asn110, Asp154, Met159, Asn167, Lys173, 174-175 (SG), 194-199 (QFGVGF), Phe199, and Thr246 contribute to the ATP site. Residue Asn110 is glycosylated (N-linked (GlcNAc...) asparagine). Residues 289–328 (ETEVPVEEDESADEETETTSTEEEKEEDAEEEDGEKKQKT) form a disordered region. Positions 290–321 (TEVPVEEDESADEETETTSTEEEKEEDAEEED) are enriched in acidic residues. Asn452 and Asn620 each carry an N-linked (GlcNAc...) asparagine glycan. Residues 777–792 (VADEEIEAAEEPETSE) are compositionally biased toward acidic residues. The disordered stretch occupies residues 777-823 (VADEEIEAAEEPETSEATETKSDDLAGGLNIEAEPVEQQEENTKDEL). A Prevents secretion from ER motif is present at residues 820-823 (KDEL).

It belongs to the heat shock protein 90 family. As to quaternary structure, interacts with FKBP42. Interacts with P23-1. In terms of tissue distribution, ubiquitous.

The protein resides in the endoplasmic reticulum lumen. Its function is as follows. May have a molecular chaperone role in the processing of secreted materials. Required for shoot apical meristem (SAM), root apical meristem (RAM) and floral meristem (FM) formation, probably by regulating the folding of CLAVATA proteins (CLVs). Also involved in pollen tube elongation. Involved in resistance to tunicamycin- or high calcium-induced ER stresses. Possesses ATPase activity. This chain is Endoplasmin homolog, found in Arabidopsis thaliana (Mouse-ear cress).